The following is a 388-amino-acid chain: Chorismate synthase (388 aa).

Positions 39 and 45 each coordinate NADP(+). Residues 130–132 (RSS), 251–252 (NA), G296, 311–315 (KPIPT), and R337 each bind FMN.

Belongs to the chorismate synthase family. In terms of assembly, homotetramer. It depends on FMNH2 as a cofactor.

It carries out the reaction 5-O-(1-carboxyvinyl)-3-phosphoshikimate = chorismate + phosphate. It functions in the pathway metabolic intermediate biosynthesis; chorismate biosynthesis; chorismate from D-erythrose 4-phosphate and phosphoenolpyruvate: step 7/7. In terms of biological role, catalyzes the anti-1,4-elimination of the C-3 phosphate and the C-6 proR hydrogen from 5-enolpyruvylshikimate-3-phosphate (EPSP) to yield chorismate, which is the branch point compound that serves as the starting substrate for the three terminal pathways of aromatic amino acid biosynthesis. This reaction introduces a second double bond into the aromatic ring system. The protein is Chorismate synthase of Geobacillus sp. (strain WCH70).